A 741-amino-acid polypeptide reads, in one-letter code: Nuclear pore complex protein Nup88 (741 aa).

Alanine 2 carries the N-acetylalanine modification. Serine 35, serine 50, serine 379, serine 437, serine 442, and serine 517 each carry phosphoserine. Threonine 525 is modified (phosphothreonine). A Phosphoserine modification is found at serine 540. Residues glutamate 585–leucine 651 adopt a coiled-coil conformation. At serine 698 the chain carries Phosphoserine.

Interacts with NUP214/CAN. Interacts with NUP62 and NUP98. As to expression, ubiquitous.

It localises to the nucleus. The protein resides in the nuclear pore complex. Component of nuclear pore complex. The protein is Nuclear pore complex protein Nup88 (NUP88) of Homo sapiens (Human).